Reading from the N-terminus, the 170-residue chain is Ribosome maturation factor RimM (170 aa).

The 73-residue stretch at 98 to 170 folds into the PRC barrel domain; the sequence is PDEYYWVDLE…RIVVDWDPEF (73 aa).

It belongs to the RimM family. As to quaternary structure, binds ribosomal protein uS19.

It is found in the cytoplasm. An accessory protein needed during the final step in the assembly of 30S ribosomal subunit, possibly for assembly of the head region. Essential for efficient processing of 16S rRNA. May be needed both before and after RbfA during the maturation of 16S rRNA. It has affinity for free ribosomal 30S subunits but not for 70S ribosomes. This chain is Ribosome maturation factor RimM, found in Xylella fastidiosa (strain 9a5c).